The primary structure comprises 369 residues: MNTKPLRHGYTTGACAAAAAKGAARMLREQRPVEEVELVLPKGERVAFRLHGQEFDDSAASCFVVKDAGDDPDVTNGAEIHARVRREPLNRSGARTMVFVDGGKGVGTVTKPGLGVGVGNPAINPVPMRMITEGVKEEFSVVCLPQVLHVTISIPNGEELAKKTLNARLGIVGGLSILGTTGIVRPISAKAWTDTLDAALDVARACGCETIVLSTGRTSELVAIHAGIGDRGPGTGKTLPEEAYVMMGDHVGYALRACARKGVRHVILVGQFAKLLKIACGHEQTHVSSSELDLQMLAEWLHELGSRSPVPGPWSRYNTARQVLEESGNDSLFMELVCTRARDAARRLAPSLDIKVLLAGYDSTVLYFG.

Belongs to the CbiD family.

It carries out the reaction Co-precorrin-5B + S-adenosyl-L-methionine = Co-precorrin-6A + S-adenosyl-L-homocysteine. It functions in the pathway cofactor biosynthesis; adenosylcobalamin biosynthesis; cob(II)yrinate a,c-diamide from sirohydrochlorin (anaerobic route): step 6/10. Catalyzes the methylation of C-1 in cobalt-precorrin-5B to form cobalt-precorrin-6A. The protein is Cobalt-precorrin-5B C(1)-methyltransferase of Geobacter metallireducens (strain ATCC 53774 / DSM 7210 / GS-15).